The following is a 517-amino-acid chain: Dopamine receptor 4 (517 aa).

The Extracellular segment spans residues 1–46 (MLAYGSDPNAEDLYITMTPSVSTENDTTVWATEEPAAIVWRHPLLA). An N-linked (GlcNAc...) asparagine glycan is attached at asparagine 25. Residues 47–67 (IALFSICLLTVAGNCLVVIAV) form a helical membrane-spanning segment. Residues 68-77 (CTKKYLRNPT) are Cytoplasmic-facing. A helical membrane pass occupies residues 78-98 (GYLIISLAIADLIVGVIVMPM). The Extracellular portion of the chain corresponds to 99–108 (NSLFEIANHT). A glycan (N-linked (GlcNAc...) asparagine) is linked at asparagine 106. The chain crosses the membrane as a helical span at residues 109–129 (WLFGLMMCDVFHAMDILASTA). Residues 130–159 (SIWNLCVISLDRYMAGQDPIGYRDKVSKRR) lie on the Cytoplasmic side of the membrane. The chain crosses the membrane as a helical span at residues 160-180 (ILMAILSVWVLSAILSFPGII). Over 181–209 (WWRTSSPHLYEDQSQCLFTDSKMYVSFSS) the chain is Extracellular. A helical membrane pass occupies residues 210–230 (LVSFYIPLFLILFAYGKVYII). At 231 to 409 (ATRHSKGMRM…YVHEQRAART (179 aa)) the chain is on the cytoplasmic side. The segment at 309 to 339 (NDRGEHNNNNTVRQPLLRGTEGCHSDSISRS) is disordered. The helical transmembrane segment at 410-430 (LSIVVGAFILCWTPFFVFTPL) threads the bilayer. The Extracellular segment spans residues 431-442 (TAFCESCFSNKE). The chain crosses the membrane as a helical span at residues 443–463 (TIFTFVTWAGHLNSMLNPLIY). The Cytoplasmic portion of the chain corresponds to 464–517 (SRFSRDFRRAFKQILTCQRQQKVKTAFKTPLSLVFTQLISVTQMWEQPPNTSIE).

It belongs to the G-protein coupled receptor 1 family. Expressed in pharyngeal neurons I1 and I2, neurons ASG, AVL, CAN, PQR, vulva, intestine, rectal glands and rectal epithelial glands. Also expressed in neurons in ray 8 in males.

Its subcellular location is the cell membrane. Its function is as follows. Receptor for dopamine. The activity of this receptor is mediated by G proteins which activate adenylyl cyclase. In terms of antagonist responses, would be classed with the D1-like dopamine receptor group. The sequence is that of Dopamine receptor 4 (dop-4) from Caenorhabditis elegans.